The following is a 166-amino-acid chain: Transcriptional repressor NrdR (166 aa).

A zinc finger lies at 3-34 (CPFCGHDDTQVKDSRSTEDGVAIRRRRVCSAC). Residues 49 to 139 (LSVTKADGRR…VYRDFREVEA (91 aa)) enclose the ATP-cone domain. The tract at residues 146-166 (DMKPIPGETDTPSPDDSQETP) is disordered.

This sequence belongs to the NrdR family. Requires Zn(2+) as cofactor.

Negatively regulates transcription of bacterial ribonucleotide reductase nrd genes and operons by binding to NrdR-boxes. This Gluconobacter oxydans (strain 621H) (Gluconobacter suboxydans) protein is Transcriptional repressor NrdR.